A 156-amino-acid polypeptide reads, in one-letter code: Class I hydrophobin B (156 aa).

The signal sequence occupies residues 1 to 18; sequence MQFTLSAVVLALAGFSAA. 4 cysteine pairs are disulfide-bonded: cysteine 52–cysteine 130, cysteine 60–cysteine 124, cysteine 61–cysteine 101, and cysteine 131–cysteine 149.

This sequence belongs to the fungal hydrophobin family.

The protein resides in the secreted. It localises to the cell wall. Aerial growth, conidiation, and dispersal of filamentous fungi in the environment rely upon a capability of their secreting small amphipathic proteins called hydrophobins (HPBs) with low sequence identity. Class I can self-assemble into an outermost layer of rodlet bundles on aerial cell surfaces, conferring cellular hydrophobicity that supports fungal growth, development and dispersal; whereas Class II form highly ordered films at water-air interfaces through intermolecular interactions but contribute nothing to the rodlet structure. In P.expansum, hydrophobins contribute to germination, tolerance to cold stress and mycotoxins patulin and citrinin production. HfbA and HfbB are essential for fungal surface hydrophobicity. The protein is Class I hydrophobin B of Penicillium expansum (Blue mold rot fungus).